A 404-amino-acid chain; its full sequence is Corticosteroid-binding globulin (404 aa).

The signal sequence occupies residues 1–30 (MAWSTRTMMSLALYTCFLWLLTSGLKTVQS). 2 N-linked (GlcNAc...) asparagine glycosylation sites follow: Asn95 and Asn225. Residue Gln253 participates in cortisol binding. Asn259 is a glycosylation site (N-linked (GlcNAc...) asparagine). Glu285 contributes to the cortisol binding site. Asn326 carries N-linked (GlcNAc...) asparagine glycosylation. Trp392 serves as a coordination point for cortisol.

This sequence belongs to the serpin family. Expressed by the liver; secreted in plasma.

It is found in the secreted. Its function is as follows. Major transport protein for glucocorticoids and progestins in the blood of almost all vertebrate species. This is Corticosteroid-binding globulin (SERPINA6) from Mesocricetus auratus (Golden hamster).